The chain runs to 314 residues: tRNA N6-adenosine threonylcarbamoyltransferase (314 aa).

Positions 106, 110, and 127 each coordinate Fe cation. Substrate is bound by residues 127–131 (YVSGA), Asp159, Gly172, Glu176, and Asn255. Residue Asp283 coordinates Fe cation.

The protein belongs to the KAE1 / TsaD family. It depends on Fe(2+) as a cofactor.

Its subcellular location is the cytoplasm. It carries out the reaction L-threonylcarbamoyladenylate + adenosine(37) in tRNA = N(6)-L-threonylcarbamoyladenosine(37) in tRNA + AMP + H(+). Functionally, required for the formation of a threonylcarbamoyl group on adenosine at position 37 (t(6)A37) in tRNAs that read codons beginning with adenine. Is probably involved in the transfer of the threonylcarbamoyl moiety of threonylcarbamoyl-AMP (TC-AMP) to the N6 group of A37. The sequence is that of tRNA N6-adenosine threonylcarbamoyltransferase from Nanoarchaeum equitans (strain Kin4-M).